The sequence spans 519 residues: Serine/threonine-protein kinase RIO3 (519 aa).

Residues Ser-8 and Ser-112 each carry the phosphoserine modification. Tyr-122 is subject to Phosphotyrosine. The segment at 122–159 (YEDSDSSEDEVDWQDTRDDPYRPAKPIPTPKKGFIGKG) is disordered. Residues 124 to 134 (DSDSSEDEVDW) show a composition bias toward acidic residues. 3 positions are modified to phosphoserine: Ser-125, Ser-127, and Ser-128. One can recognise a Protein kinase domain in the interval 251 to 519 (ETITGCISTG…DGGPPILYDE (269 aa)). ATP-binding positions include 257–265 (ISTGKESVV) and Lys-290. The Proton acceptor role is filled by Asp-406.

Belongs to the protein kinase superfamily. RIO-type Ser/Thr kinase family. In terms of assembly, interacts with CASP10. Interacts with IRF3; RIOK3 probably mediates the interaction of TBK1 with IRF3. Associated with 40S pre-ribosomal particles. The cofactor is Mg(2+). Autophosphorylated (in vitro).

It is found in the cytoplasm. It catalyses the reaction L-seryl-[protein] + ATP = O-phospho-L-seryl-[protein] + ADP + H(+). The enzyme catalyses L-threonyl-[protein] + ATP = O-phospho-L-threonyl-[protein] + ADP + H(+). Its function is as follows. Involved in regulation of type I interferon (IFN)-dependent immune response which plays a critical role in the innate immune response against DNA and RNA viruses. May act as an adapter protein essential for the recruitment of TBK1 to IRF3. Phosphorylates IFIH1 within the C-terminal region interfering with IFIH1 filament assembly on long dsRNA and resulting in attenuated IFIH1-signaling. Can inhibit CASP10 isoform 7-mediated activation of the NF-kappaB signaling pathway. May play a role in the biogenesis of the 40S ribosomal subunit. Involved in the processing of 21S pre-rRNA to the mature 18S rRNA. In Bos taurus (Bovine), this protein is Serine/threonine-protein kinase RIO3 (RIOK3).